We begin with the raw amino-acid sequence, 139 residues long: Large ribosomal subunit protein uL16 (139 aa).

The segment covering 1-19 has biased composition (basic residues); that stretch reads MLIPRKVKHRKQHHPKRSG. The segment at 1–22 is disordered; sequence MLIPRKVKHRKQHHPKRSGVAK.

It belongs to the universal ribosomal protein uL16 family. Part of the 50S ribosomal subunit.

Its function is as follows. Binds 23S rRNA and is also seen to make contacts with the A and possibly P site tRNAs. This Acidothermus cellulolyticus (strain ATCC 43068 / DSM 8971 / 11B) protein is Large ribosomal subunit protein uL16.